Reading from the N-terminus, the 207-residue chain is LexA repressor (207 aa).

Residues 28–48 (RAEIARELGFRSANAAEEHLK) constitute a DNA-binding region (H-T-H motif). Residues S124 and K161 each act as for autocatalytic cleavage activity in the active site.

Belongs to the peptidase S24 family. Homodimer.

It catalyses the reaction Hydrolysis of Ala-|-Gly bond in repressor LexA.. Its function is as follows. Represses a number of genes involved in the response to DNA damage (SOS response), including recA and lexA. In the presence of single-stranded DNA, RecA interacts with LexA causing an autocatalytic cleavage which disrupts the DNA-binding part of LexA, leading to derepression of the SOS regulon and eventually DNA repair. The polypeptide is LexA repressor (Vibrio vulnificus (strain CMCP6)).